A 477-amino-acid polypeptide reads, in one-letter code: MSPQTETKASVGFKAGVKDYKLTYYTPDYQTKDTDILAAFRVTPQPGVPPEEAGAAVAAESSTGTWTTVWTDGLTSLDRYKGRCYGLEPVPGEENQYIAYVAYPLDLFEEGSVTNMFTSIVGNVFGFKALRALRLEDLRVPPAYSKTFQGPPHGIQVERDKLNKYGRPLLGCTIKPKLGLSAKNYGRAVYECLRGGLDFTKDDENVNSQPFMRWRDRFLFCAEAIYKAQAETGEIKGHYLNATAGTCEEMIKRAVCARELGVPIVMHDYLTGGFTANTSLAHYCRDNGLLLHIHRAMHAVIDRQKNHGMHFRVLAKALRLSGGDHIHAGTVVGKLEGERDITLGFVDLLRDDFIEKDRSRGIYFTQDWVSLPGVLPVASGGIHVWHMPALTEIFGDDSVLQFGGGTLGHPWGNAPGAVANRVALEACVQARNEGRDLAREGNDIIREASKWSPELAAACEVWKEIKFEFAAVDTLDK.

The propeptide occupies 1–2 (MS). Pro3 is subject to N-acetylproline. An N6,N6,N6-trimethyllysine modification is found at Lys14. Residues Asn123 and Thr173 each coordinate substrate. Residue Lys175 is the Proton acceptor of the active site. Lys177 provides a ligand contact to substrate. Positions 201, 203, and 204 each coordinate Mg(2+). Residue Lys201 is modified to N6-carboxylysine. Catalysis depends on His294, which acts as the Proton acceptor. The substrate site is built by Arg295, His327, and Ser379.

The protein belongs to the RuBisCO large chain family. Type I subfamily. Heterohexadecamer of 8 large chains and 8 small chains; disulfide-linked. The disulfide link is formed within the large subunit homodimers. The cofactor is Mg(2+). Post-translationally, the disulfide bond which can form in the large chain dimeric partners within the hexadecamer appears to be associated with oxidative stress and protein turnover.

It localises to the plastid. The protein localises to the chloroplast. The enzyme catalyses 2 (2R)-3-phosphoglycerate + 2 H(+) = D-ribulose 1,5-bisphosphate + CO2 + H2O. It catalyses the reaction D-ribulose 1,5-bisphosphate + O2 = 2-phosphoglycolate + (2R)-3-phosphoglycerate + 2 H(+). In terms of biological role, ruBisCO catalyzes two reactions: the carboxylation of D-ribulose 1,5-bisphosphate, the primary event in carbon dioxide fixation, as well as the oxidative fragmentation of the pentose substrate in the photorespiration process. Both reactions occur simultaneously and in competition at the same active site. The protein is Ribulose bisphosphate carboxylase large chain of Manihot esculenta (Cassava).